The chain runs to 99 residues: C-C motif chemokine 8 (99 aa).

Positions 1-23 (MKVSAGILCLLLVAATFGTQVLA) are cleaved as a signal peptide. Gln24 bears the Pyrrolidone carboxylic acid mark. 2 disulfides stabilise this stretch: Cys34–Cys59 and Cys35–Cys75.

The protein belongs to the intercrine beta (chemokine CC) family. Monomer or homodimer; in equilibrium.

The protein resides in the secreted. Chemotactic factor that attracts monocytes. This protein can bind heparin. In Bos taurus (Bovine), this protein is C-C motif chemokine 8 (CCL8).